The sequence spans 237 residues: Phosphoribosylaminoimidazole-succinocarboxamide synthase (237 aa).

Belongs to the SAICAR synthetase family.

It catalyses the reaction 5-amino-1-(5-phospho-D-ribosyl)imidazole-4-carboxylate + L-aspartate + ATP = (2S)-2-[5-amino-1-(5-phospho-beta-D-ribosyl)imidazole-4-carboxamido]succinate + ADP + phosphate + 2 H(+). It functions in the pathway purine metabolism; IMP biosynthesis via de novo pathway; 5-amino-1-(5-phospho-D-ribosyl)imidazole-4-carboxamide from 5-amino-1-(5-phospho-D-ribosyl)imidazole-4-carboxylate: step 1/2. This is Phosphoribosylaminoimidazole-succinocarboxamide synthase from Oceanobacillus iheyensis (strain DSM 14371 / CIP 107618 / JCM 11309 / KCTC 3954 / HTE831).